Reading from the N-terminus, the 1044-residue chain is Isoleucine--tRNA ligase (1044 aa).

A 'HIGH' region motif is present at residues 48-58; it reads PFATGLPHFGH. The short motif at 594 to 598 is the 'KMSKS' region element; that stretch reads KMSKS. Lys597 is a binding site for ATP.

Belongs to the class-I aminoacyl-tRNA synthetase family. IleS type 2 subfamily. As to quaternary structure, monomer. The cofactor is Zn(2+).

It localises to the cytoplasm. The enzyme catalyses tRNA(Ile) + L-isoleucine + ATP = L-isoleucyl-tRNA(Ile) + AMP + diphosphate. Its function is as follows. Catalyzes the attachment of isoleucine to tRNA(Ile). As IleRS can inadvertently accommodate and process structurally similar amino acids such as valine, to avoid such errors it has two additional distinct tRNA(Ile)-dependent editing activities. One activity is designated as 'pretransfer' editing and involves the hydrolysis of activated Val-AMP. The other activity is designated 'posttransfer' editing and involves deacylation of mischarged Val-tRNA(Ile). In Borrelia recurrentis (strain A1), this protein is Isoleucine--tRNA ligase.